Consider the following 138-residue polypeptide: Histone H2A.Z (138 aa).

Residues 1-10 (MSSKVGGGKG) are compositionally biased toward gly residues. Positions 1-21 (MSSKVGGGKGGKSKTSSEAKV) are disordered. K4 and K9 each carry N6-acetyllysine.

This sequence belongs to the histone H2A family. In terms of assembly, the nucleosome is a histone octamer containing two molecules each of H2A, H2B, H3 and H4 assembled in one H3-H4 heterotetramer and two H2A-H2B heterodimers. The octamer wraps approximately 147 bp of DNA. H2A or its variant H2A.Z forms a heterodimer with H2B. H2A.Z associates with the VPS72/SWC2 subunit of the SWR1 chromatin remodeling complex. Also interacts with RBP1/DNA-directed RNA polymerase II largest subunit. Post-translationally, acetylated once deposited into chromatin.

It localises to the nucleus. The protein localises to the chromosome. Variant histone H2A which can replace H2A in some nucleosomes. Nucleosomes wrap and compact DNA into chromatin, limiting DNA accessibility to the cellular machineries which require DNA as a template. Histones thereby play a central role in transcription regulation, DNA repair, DNA replication and chromosomal stability. DNA accessibility is regulated via a complex set of post-translational modifications of histones, also called histone code, and nucleosome remodeling. This variant is enriched at promoters, it may keep them in a repressed state until the appropriate activation signal is received. Near telomeres, it may counteract gene silencing caused by the spread of heterochromatin proteins. Required for the RNA polymerase II and SPT15/TBP recruitment to the target genes. Involved in chromosome stability. The sequence is that of Histone H2A.Z (HTZ1) from Cryptococcus neoformans var. neoformans serotype D (strain B-3501A) (Filobasidiella neoformans).